Reading from the N-terminus, the 362-residue chain is Phosphoserine aminotransferase (362 aa).

Arg-43 lines the L-glutamate pocket. Residues 77-78 (AS), Trp-103, Thr-153, Asp-173, and Gln-196 each bind pyridoxal 5'-phosphate. An N6-(pyridoxal phosphate)lysine modification is found at Lys-197. 238-239 (NT) contacts pyridoxal 5'-phosphate.

It belongs to the class-V pyridoxal-phosphate-dependent aminotransferase family. SerC subfamily. Homodimer. It depends on pyridoxal 5'-phosphate as a cofactor.

It is found in the cytoplasm. It carries out the reaction O-phospho-L-serine + 2-oxoglutarate = 3-phosphooxypyruvate + L-glutamate. The catalysed reaction is 4-(phosphooxy)-L-threonine + 2-oxoglutarate = (R)-3-hydroxy-2-oxo-4-phosphooxybutanoate + L-glutamate. The protein operates within amino-acid biosynthesis; L-serine biosynthesis; L-serine from 3-phospho-D-glycerate: step 2/3. Its pathway is cofactor biosynthesis; pyridoxine 5'-phosphate biosynthesis; pyridoxine 5'-phosphate from D-erythrose 4-phosphate: step 3/5. Catalyzes the reversible conversion of 3-phosphohydroxypyruvate to phosphoserine and of 3-hydroxy-2-oxo-4-phosphonooxybutanoate to phosphohydroxythreonine. The sequence is that of Phosphoserine aminotransferase (serC) from Niallia circulans (Bacillus circulans).